We begin with the raw amino-acid sequence, 301 residues long: Phosducin-like protein (301 aa).

Thr2 bears the N-acetylthreonine mark. A disordered region spans residues 15-53 (YYYSSSEEEDSDHEDKDRGRGALAGSSMPADADLAGEGI). Ser20, Ser25, Ser226, Ser293, and Ser296 each carry phosphoserine. A Phosducin domain is found at 37 to 299 (LAGSSMPADA…TCHSEDSDLE (263 aa)). Residues 158–301 (FKQVFEIPSG…HSEDSDLEID (144 aa)) form a thioredoxin fold region.

The protein belongs to the phosducin family. In terms of assembly, forms a complex with the beta and gamma subunits of the GTP-binding protein, transducin. Interacts with the CCT chaperonin complex.

The protein resides in the cell projection. The protein localises to the cilium. In terms of biological role, functions as a co-chaperone for CCT in the assembly of heterotrimeric G protein complexes, facilitates the assembly of both Gbeta-Ggamma and RGS-Gbeta5 heterodimers. Also acts as a positive regulator of hedgehog signaling and regulates ciliary function. This chain is Phosducin-like protein (PDCL), found in Bos taurus (Bovine).